A 439-amino-acid polypeptide reads, in one-letter code: Mitochondrial distribution and morphology protein 12 (439 aa).

One can recognise an SMP-LTD domain in the interval 1 to 439; sequence MSIDINWDTI…VYPSFWTFLV (439 aa). Disordered regions lie at residues 65 to 165 and 229 to 284; these read PLPD…PGAL and LTLT…HEKS. Residues 69–90 are compositionally biased toward acidic residues; that stretch reads FYEDDEDYPDEEGDEAENEAED. The span at 109–121 shows a compositional bias: basic and acidic residues; that stretch reads PSRDSQSRERGRG. A compositionally biased stretch (polar residues) spans 229–243; that stretch reads LTLTPQSHPDPTSRP.

It belongs to the MDM12 family. Component of the ER-mitochondria encounter structure (ERMES) or MDM complex, composed of MMM1, MDM10, mdm12 and MDM34. An MMM1 homodimer associates with one molecule of mdm12 on each side in a pairwise head-to-tail manner, and the SMP-LTD domains of MMM1 and mdm12 generate a continuous hydrophobic tunnel for phospholipid trafficking.

The protein resides in the mitochondrion outer membrane. It is found in the endoplasmic reticulum membrane. In terms of biological role, component of the ERMES/MDM complex, which serves as a molecular tether to connect the endoplasmic reticulum (ER) and mitochondria. Components of this complex are involved in the control of mitochondrial shape and protein biogenesis, and function in nonvesicular lipid trafficking between the ER and mitochondria. mdm12 is required for the interaction of the ER-resident membrane protein MMM1 and the outer mitochondrial membrane-resident beta-barrel protein MDM10. The mdm12-MMM1 subcomplex functions in the major beta-barrel assembly pathway that is responsible for biogenesis of all mitochondrial outer membrane beta-barrel proteins, and acts in a late step after the SAM complex. The MDM10-mdm12-MMM1 subcomplex further acts in the TOM40-specific pathway after the action of the mdm12-MMM1 complex. Essential for establishing and maintaining the structure of mitochondria and maintenance of mtDNA nucleoids. The protein is Mitochondrial distribution and morphology protein 12 of Pyrenophora tritici-repentis (strain Pt-1C-BFP) (Wheat tan spot fungus).